The sequence spans 369 residues: Phospho-N-acetylmuramoyl-pentapeptide-transferase (369 aa).

10 consecutive transmembrane segments (helical) span residues 2-22, 55-75, 82-102, 120-140, 163-183, 196-216, 240-260, 267-287, 292-312, and 349-369; these read IPLL…TQLF, AVVI…SWWI, PSVS…VGFL, AKLI…INFA, LAFA…NLII, LDGL…LIGI, PLDL…FLWW, IFMG…FAIL, ILLA…ILQV, and ILGG…WVVF.

It belongs to the glycosyltransferase 4 family. MraY subfamily. Mg(2+) serves as cofactor.

It localises to the cell membrane. It carries out the reaction UDP-N-acetyl-alpha-D-muramoyl-L-alanyl-gamma-D-glutamyl-meso-2,6-diaminopimeloyl-D-alanyl-D-alanine + di-trans,octa-cis-undecaprenyl phosphate = di-trans,octa-cis-undecaprenyl diphospho-N-acetyl-alpha-D-muramoyl-L-alanyl-D-glutamyl-meso-2,6-diaminopimeloyl-D-alanyl-D-alanine + UMP. Its pathway is cell wall biogenesis; peptidoglycan biosynthesis. Catalyzes the initial step of the lipid cycle reactions in the biosynthesis of the cell wall peptidoglycan: transfers peptidoglycan precursor phospho-MurNAc-pentapeptide from UDP-MurNAc-pentapeptide onto the lipid carrier undecaprenyl phosphate, yielding undecaprenyl-pyrophosphoryl-MurNAc-pentapeptide, known as lipid I. This is Phospho-N-acetylmuramoyl-pentapeptide-transferase from Renibacterium salmoninarum (strain ATCC 33209 / DSM 20767 / JCM 11484 / NBRC 15589 / NCIMB 2235).